We begin with the raw amino-acid sequence, 45 residues long: Cytochrome b559 subunit beta (45 aa).

Thr-2 is modified (N-acetylthreonine). The Cytoplasmic segment spans residues 2–17 (TSNTPNQEPVSYPIFT). A helical membrane pass occupies residues 18–42 (VRWVAVHTLAVPTIFFLGAIAAMQF). Heme is bound at residue His-24. Topologically, residues 43–45 (IQR) are lumenal.

In terms of assembly, heterodimer of an alpha subunit and a beta subunit. PSII is composed of 1 copy each of membrane proteins PsbA, PsbB, PsbC, PsbD, PsbE, PsbF, PsbH, PsbI, PsbJ, PsbK, PsbL, PsbM, PsbT, PsbX, PsbY, PsbZ, Psb30/Ycf12, peripheral proteins PsbO, CyanoQ (PsbQ), PsbU, PsbV and a large number of cofactors. It forms dimeric complexes. Part of a photosystem II (PSII) assembly intermediate complex PSII-I; crystallized from a strain deleted of psbJ, it forms monomeric PSII before addition of the oxygen evolving complex. PSII-I includes 3 assembly factors not found in mature PSII (Psb27, Psb28 and Psb34). Heme b serves as cofactor.

It localises to the cellular thylakoid membrane. Functionally, this b-type cytochrome is tightly associated with the reaction center of photosystem II (PSII). PSII is a light-driven water:plastoquinone oxidoreductase that uses light energy to abstract electrons from H(2)O, generating O(2) and a proton gradient subsequently used for ATP formation. It consists of a core antenna complex that captures photons, and an electron transfer chain that converts photonic excitation into a charge separation. This chain is Cytochrome b559 subunit beta, found in Thermosynechococcus vestitus (strain NIES-2133 / IAM M-273 / BP-1).